The following is a 103-amino-acid chain: Large ribosomal subunit protein uL24 (103 aa).

This sequence belongs to the universal ribosomal protein uL24 family. Part of the 50S ribosomal subunit.

In terms of biological role, one of two assembly initiator proteins, it binds directly to the 5'-end of the 23S rRNA, where it nucleates assembly of the 50S subunit. One of the proteins that surrounds the polypeptide exit tunnel on the outside of the subunit. In Actinobacillus pleuropneumoniae serotype 5b (strain L20), this protein is Large ribosomal subunit protein uL24.